Here is a 178-residue protein sequence, read N- to C-terminus: Ribonuclease M5 (178 aa).

In terms of domain architecture, Toprim spans 10–103 (DGVIVCEGKT…NSTKIGVAEA (94 aa)). Mg(2+) is bound by residues glutamate 16, aspartate 62, and aspartate 64.

The protein belongs to the ribonuclease M5 family. Requires Mg(2+) as cofactor.

Its subcellular location is the cytoplasm. It carries out the reaction Endonucleolytic cleavage of RNA, removing 21 and 42 nucleotides, respectively, from the 5'- and 3'-termini of a 5S-rRNA precursor.. Required for correct processing of both the 5' and 3' ends of 5S rRNA precursor. Cleaves both sides of a double-stranded region yielding mature 5S rRNA in one step. This chain is Ribonuclease M5, found in Mycoplasma pneumoniae (strain ATCC 29342 / M129 / Subtype 1) (Mycoplasmoides pneumoniae).